Here is a 243-residue protein sequence, read N- to C-terminus: 1-(5-phosphoribosyl)-5-[(5-phosphoribosylamino)methylideneamino] imidazole-4-carboxamide isomerase (243 aa).

Asp-8 acts as the Proton acceptor in catalysis. The Proton donor role is filled by Asp-130.

Belongs to the HisA/HisF family.

Its subcellular location is the cytoplasm. The catalysed reaction is 1-(5-phospho-beta-D-ribosyl)-5-[(5-phospho-beta-D-ribosylamino)methylideneamino]imidazole-4-carboxamide = 5-[(5-phospho-1-deoxy-D-ribulos-1-ylimino)methylamino]-1-(5-phospho-beta-D-ribosyl)imidazole-4-carboxamide. It participates in amino-acid biosynthesis; L-histidine biosynthesis; L-histidine from 5-phospho-alpha-D-ribose 1-diphosphate: step 4/9. The protein is 1-(5-phosphoribosyl)-5-[(5-phosphoribosylamino)methylideneamino] imidazole-4-carboxamide isomerase of Saccharophagus degradans (strain 2-40 / ATCC 43961 / DSM 17024).